Reading from the N-terminus, the 199-residue chain is Protein extra-macrochaetae (199 aa).

Residues 23–75 (RIQRHPTHRGDGENAEMKMYLSKLKDLVPFMPKNRKLTKLEIIQHVIDYICDL) form the bHLH domain. S106 is subject to Phosphoserine. The interval 127–199 (RLNAEQPAKV…QNAEKDSRQS (73 aa)) is disordered. Positions 161–182 (QQHQQQQQLQLQQQQLQSQQQL) are enriched in low complexity.

Heterodimer with other HLH proteins.

The protein resides in the nucleus. Participates in sensory organ patterning by antagonizing the neurogenic activity of the Achaete-scute complex (AS-C). It lacks a basic DNA-binding domain but is able to form heterodimers with other HLH proteins, thereby inhibiting DNA binding. May sequester proneural proteins in complexes inefficient for DNA interaction. EMC also affects vein differentiation. Inhibits the activity of AS-C proteins by forming an non-DNA binding heterodimer. This is Protein extra-macrochaetae (emc) from Drosophila melanogaster (Fruit fly).